The sequence spans 372 residues: Chaperone protein DnaJ (372 aa).

One can recognise a J domain in the interval 5–70 (DYYDLLEVGR…EKRAGYDRYG (66 aa)). The segment at 134 to 212 (GIQAPIHYVT…CGGSGRRRDE (79 aa)) adopts a CR-type zinc-finger fold. Zn(2+) is bound by residues cysteine 147, cysteine 150, cysteine 164, cysteine 167, cysteine 186, cysteine 189, cysteine 200, and cysteine 203. CXXCXGXG motif repeat units follow at residues 147–154 (CDTCQGTG), 164–171 (CHTCQGSG), 186–193 (CTTCYGEG), and 200–207 (CKKCGGSG).

The protein belongs to the DnaJ family. In terms of assembly, homodimer. Requires Zn(2+) as cofactor.

The protein localises to the cytoplasm. In terms of biological role, participates actively in the response to hyperosmotic and heat shock by preventing the aggregation of stress-denatured proteins and by disaggregating proteins, also in an autonomous, DnaK-independent fashion. Unfolded proteins bind initially to DnaJ; upon interaction with the DnaJ-bound protein, DnaK hydrolyzes its bound ATP, resulting in the formation of a stable complex. GrpE releases ADP from DnaK; ATP binding to DnaK triggers the release of the substrate protein, thus completing the reaction cycle. Several rounds of ATP-dependent interactions between DnaJ, DnaK and GrpE are required for fully efficient folding. Also involved, together with DnaK and GrpE, in the DNA replication of plasmids through activation of initiation proteins. The protein is Chaperone protein DnaJ of Wolbachia pipientis wMel.